The sequence spans 110 residues: UPF0122 protein SE_0911 (110 aa).

It belongs to the UPF0122 family.

Might take part in the signal recognition particle (SRP) pathway. This is inferred from the conservation of its genetic proximity to ftsY/ffh. May be a regulatory protein. The protein is UPF0122 protein SE_0911 of Staphylococcus epidermidis (strain ATCC 12228 / FDA PCI 1200).